A 222-amino-acid chain; its full sequence is FCS-Like Zinc finger 13 (222 aa).

The segment at 149–192 adopts an FLZ-type zinc-finger fold; it reads EFLSSCCLCKKKLQGKDIYMYKGEMGFCSAECRSVQIMNDERQE.

This sequence belongs to the FLZ family. Interacts with KIN10 and KIN11 via its FLZ-type zinc finger domain. Interacts with KINB1, KINB2, KINB3 and SNF4 via its N-terminal part.

It localises to the nucleus. It is found in the cytoplasm. Functionally, may act as an adapter to facilitate the interaction of SnRK1 complex with effector proteins, conferring tissue- and stimulus-type specific differences in the SnRK1 regulation pathway. This chain is FCS-Like Zinc finger 13, found in Arabidopsis thaliana (Mouse-ear cress).